The sequence spans 185 residues: Probable nicotinate-nucleotide adenylyltransferase (185 aa).

Belongs to the NadD family.

The enzyme catalyses nicotinate beta-D-ribonucleotide + ATP + H(+) = deamido-NAD(+) + diphosphate. The protein operates within cofactor biosynthesis; NAD(+) biosynthesis; deamido-NAD(+) from nicotinate D-ribonucleotide: step 1/1. Catalyzes the reversible adenylation of nicotinate mononucleotide (NaMN) to nicotinic acid adenine dinucleotide (NaAD). This is Probable nicotinate-nucleotide adenylyltransferase from Methylorubrum extorquens (strain CM4 / NCIMB 13688) (Methylobacterium extorquens).